A 356-amino-acid chain; its full sequence is Trans-enoyl reductase pgmF (356 aa).

NADP(+) is bound by residues 57–60, 175–178, 198–201, Tyr216, 261–262, and 342–343; these read VDFK, SGGC, STPN, VG, and AK.

Belongs to the zinc-containing alcohol dehydrogenase family.

Functionally, FAD-linked oxidoreductase; part of the gene cluster that mediates the biosynthesis of pleosporalin A, ascomycone A, as well as a third cryptic naphthoquinone derived pigment, all responsible for the coloration of conidia. The pathway begins with the biosynthesis of the cyclized heptaketide 3-acetonyl-1,6,8-trihydroxy-2-naphthaldehyde by the NR-PKS pgmA. The C-6 hydroxyl group is further methylated by the O-methyltransferase pgmB to yield fusarubinaldehyde which is in turn oxidized by the cytochrome P450 monooxygenase pgmC at C-9. The C-1 hydroxyl group is then methylated spontaneously. Although pgmE, pgmD and pgmH are essential for the production of pleosporalin A, it is not the case for the 2 other final products and it remains difficult to assign a specific function to each enzyme. PgmF and pgmG seem not to be involved in pigment biosynthesis although they were regulated by the cluster-specific transcription factor pgmR. The protein is Trans-enoyl reductase pgmF of Aspergillus terreus (strain NIH 2624 / FGSC A1156).